The chain runs to 337 residues: 4-hydroxythreonine-4-phosphate dehydrogenase (337 aa).

Substrate-binding residues include His137 and Thr138. Residues His167, His212, and His267 each coordinate a divalent metal cation. Substrate is bound by residues Lys275, Asn284, and Arg293.

This sequence belongs to the PdxA family. As to quaternary structure, homodimer. Zn(2+) serves as cofactor. The cofactor is Mg(2+). Requires Co(2+) as cofactor.

The protein resides in the cytoplasm. It carries out the reaction 4-(phosphooxy)-L-threonine + NAD(+) = 3-amino-2-oxopropyl phosphate + CO2 + NADH. It functions in the pathway cofactor biosynthesis; pyridoxine 5'-phosphate biosynthesis; pyridoxine 5'-phosphate from D-erythrose 4-phosphate: step 4/5. Its function is as follows. Catalyzes the NAD(P)-dependent oxidation of 4-(phosphooxy)-L-threonine (HTP) into 2-amino-3-oxo-4-(phosphooxy)butyric acid which spontaneously decarboxylates to form 3-amino-2-oxopropyl phosphate (AHAP). This chain is 4-hydroxythreonine-4-phosphate dehydrogenase, found in Ectopseudomonas mendocina (strain ymp) (Pseudomonas mendocina).